Reading from the N-terminus, the 173-residue chain is Translation initiation factor IF-3 (173 aa).

This sequence belongs to the IF-3 family. As to quaternary structure, monomer.

It localises to the cytoplasm. In terms of biological role, IF-3 binds to the 30S ribosomal subunit and shifts the equilibrium between 70S ribosomes and their 50S and 30S subunits in favor of the free subunits, thus enhancing the availability of 30S subunits on which protein synthesis initiation begins. The chain is Translation initiation factor IF-3 from Methylorubrum extorquens (strain CM4 / NCIMB 13688) (Methylobacterium extorquens).